The sequence spans 631 residues: tRNA uridine 5-carboxymethylaminomethyl modification enzyme MnmG (631 aa).

FAD is bound by residues 13 to 18, V125, and S180; that span reads GGGHAG. 273 to 287 provides a ligand contact to NAD(+); it reads GPRYCPSIEDKVMRF. An FAD-binding site is contributed by Q370.

This sequence belongs to the MnmG family. In terms of assembly, homodimer. Heterotetramer of two MnmE and two MnmG subunits. The cofactor is FAD.

The protein resides in the cytoplasm. Its function is as follows. NAD-binding protein involved in the addition of a carboxymethylaminomethyl (cmnm) group at the wobble position (U34) of certain tRNAs, forming tRNA-cmnm(5)s(2)U34. This is tRNA uridine 5-carboxymethylaminomethyl modification enzyme MnmG from Vibrio campbellii (strain ATCC BAA-1116).